Reading from the N-terminus, the 268-residue chain is Putative cysteine-rich repeat secretory protein 5 (268 aa).

Residues 1-24 form the signal peptide; the sequence is MTGINTHFAVALFCFFSFSLRAMS. Gnk2-homologous domains are found at residues 27–129 and 135–248; these read SQML…NVSF and DVPS…ISAL.

The protein belongs to the cysteine-rich repeat secretory protein family.

The protein localises to the secreted. The protein is Putative cysteine-rich repeat secretory protein 5 (CRRSP5) of Arabidopsis thaliana (Mouse-ear cress).